The chain runs to 123 residues: Potassium voltage-gated channel subfamily E member 2 (123 aa).

N-linked (GlcNAc...) asparagine glycans are attached at residues Asn6 and Asn29. A helical membrane pass occupies residues Val49–Val69. Residues Ser70–Pro123 lie on the Cytoplasmic side of the membrane.

This sequence belongs to the potassium channel KCNE family. As to quaternary structure, interacts with KCNB1. Associates with KCNH2/ERG1. May associate with KCNQ2 and KCNQ3. Associates with HCN1 and probably HCN2. Heteromultimer with KCNC2. Interacts with KCNC2. Interacts with KCNQ1. Forms a heterooligomer complex with KCNQ1 that targets to the membrane raft and leading to currents with an apparently instantaneous activation, a rapid deactivation process and a linear current-voltage relationship and decreases the amplitude of the outward current.

It is found in the cell membrane. The protein resides in the apical cell membrane. Its function is as follows. Ancillary protein that functions as a regulatory subunit of the voltage-gated potassium (Kv) channel complex composed of pore-forming and potassium-conducting alpha subunits and of regulatory beta subunits. KCNE2 beta subunit modulates the gating kinetics and enhances stability of the channel complex. Alters the gating of the delayed rectifier Kv channel containing KCNB1 alpha subunit. Associates with KCNH2/HERG alpha subunit Kv channel to form the rapidly activating component of the delayed rectifying potassium current (IKr) in heart. May associate with KCNQ2 and/or KCNQ3 alpha subunits to modulate the native M-type current. May associate with HCN1 and HCN2 channel subunits to increase potassium current. Forms a heterooligomer complex with KCNQ1/KVLQT1 alpha subunits which leads to currents with an apparently instantaneous activation, a rapid deactivation process and a linear current-voltage relationship and decreases the amplitude of the outward current. KCNQ1-KCNE2 channel associates with Na(+)-coupled myo-inositol symporter in the apical membrane of choroid plexus epithelium and regulates the myo-inositol gradient between blood and cerebrospinal fluid with an impact on neuron excitability. The polypeptide is Potassium voltage-gated channel subfamily E member 2 (Mus musculus (Mouse)).